The sequence spans 842 residues: Oxysterol-binding protein-related protein 7 (842 aa).

The disordered stretch occupies residues 1-28 (MDFQERDPPFLPESAQSSKPSSAQQASE). Low complexity predominate over residues 14 to 27 (SAQSSKPSSAQQAS). In terms of domain architecture, PH spans 47 to 142 (PERQEGHLLK…WVAQLRAHRL (96 aa)). Threonine 171 carries the post-translational modification Phosphothreonine. Serine 217, serine 226, serine 256, and serine 272 each carry phosphoserine. A disordered region spans residues 330–369 (DMHQGSELSRMGVSEASTGQRRLHSLSTSSDTTADSFSSL). Low complexity predominate over residues 354-369 (SLSTSSDTTADSFSSL).

It belongs to the OSBP family. Expressed in epithelium of small and large intestines (at protein level). Expressed in stomach, duodenum, jejunum, ascending colon, spleen, thymus, lymph node, trachea and leukocytes.

Its subcellular location is the cytoplasm. It is found in the cytosol. It localises to the endoplasmic reticulum membrane. The protein resides in the cell membrane. This chain is Oxysterol-binding protein-related protein 7 (OSBPL7), found in Homo sapiens (Human).